Reading from the N-terminus, the 341-residue chain is MNKKLIALAVAAASISSVATAAEVYSDETSSLAVGGRFEARAVLADVNKDENVTNTASSEVSDKSRVRINVAGKTDITEDFYGVGFFEKEFSSADSDNDETRYAYAGVGSQYGQLVYGKADGSLGMLTDFTDIMAYHGNEAGNKLAAADRTDNNLSYVGSFDLNGDNLTVKANYVFGGSDENEGYSAAAMYAMDMGLGFGAGYGEQDGQSSKNGNEDKTGKQAFGAISYTISDFYFSGLYQDSRNTVVNNDLIDESTGYEFAAAYTYGKAVFITTYNFLEDSNASGDASDLRDSIAIDGTYYFNKNFRTYASYKFNLLDANSSTTKAQASDEFVLGARYDF.

The N-terminal stretch at 1-21 (MNKKLIALAVAAASISSVATA) is a signal peptide.

The protein belongs to the Gram-negative porin family. In terms of assembly, homotrimer.

It localises to the cell outer membrane. Forms pores that allow passive diffusion of small molecules across the outer membrane. The sequence is that of Porin-like protein L (ompL) from Photobacterium profundum (strain SS9).